The following is a 108-amino-acid chain: Long neurotoxin 43 (108 aa).

An N-terminal signal peptide occupies residues 1-21; that stretch reads MKTLLLTLVVVTIVCLDLAYT. Cystine bridges form between Cys24–Cys42, Cys35–Cys63, Cys48–Cys52, Cys67–Cys78, and Cys79–Cys84.

It belongs to the three-finger toxin family. Long-chain subfamily. Type II alpha-neurotoxin sub-subfamily. In terms of tissue distribution, expressed by the venom gland.

The protein localises to the secreted. Functionally, binds with high affinity to muscular (alpha-1/CHRNA1) and neuronal (alpha-7/CHRNA7) nicotinic acetylcholine receptor (nAChR) and inhibits acetylcholine from binding to the receptor, thereby impairing neuromuscular and neuronal transmission. The sequence is that of Long neurotoxin 43 from Drysdalia coronoides (White-lipped snake).